Here is a 345-residue protein sequence, read N- to C-terminus: Eukaryotic translation initiation factor 3 subunit F (345 aa).

An MPN domain is found at 30 to 166 (VVIQPQAIFS…TRAYISAPVG (137 aa)). The interval 310 to 345 (EGASAEAGAQRGQRGGRGGRGGQQRTQERASEEVRA) is disordered. Residues 312–321 (ASAEAGAQRG) show a composition bias toward low complexity. A compositionally biased stretch (gly residues) spans 322-331 (QRGGRGGRGG). Residues 335-345 (TQERASEEVRA) show a composition bias toward basic and acidic residues.

The protein belongs to the eIF-3 subunit F family. Component of the eukaryotic translation initiation factor 3 (eIF-3) complex.

It is found in the cytoplasm. Its function is as follows. Component of the eukaryotic translation initiation factor 3 (eIF-3) complex, which is involved in protein synthesis of a specialized repertoire of mRNAs and, together with other initiation factors, stimulates binding of mRNA and methionyl-tRNAi to the 40S ribosome. The eIF-3 complex specifically targets and initiates translation of a subset of mRNAs involved in cell proliferation. The polypeptide is Eukaryotic translation initiation factor 3 subunit F (Neosartorya fischeri (strain ATCC 1020 / DSM 3700 / CBS 544.65 / FGSC A1164 / JCM 1740 / NRRL 181 / WB 181) (Aspergillus fischerianus)).